The sequence spans 148 residues: 6,7-dimethyl-8-ribityllumazine synthase (148 aa).

5-amino-6-(D-ribitylamino)uracil contacts are provided by residues Phe-13, 44–46, and 73–75; these read ALE and MVI. (2S)-2-hydroxy-3-oxobutyl phosphate is bound at residue 78–79; sequence ET. Residue His-81 is the Proton donor of the active site. Asn-106 contributes to the 5-amino-6-(D-ribitylamino)uracil binding site. A (2S)-2-hydroxy-3-oxobutyl phosphate-binding site is contributed by Arg-120.

The protein belongs to the DMRL synthase family.

The catalysed reaction is (2S)-2-hydroxy-3-oxobutyl phosphate + 5-amino-6-(D-ribitylamino)uracil = 6,7-dimethyl-8-(1-D-ribityl)lumazine + phosphate + 2 H2O + H(+). It functions in the pathway cofactor biosynthesis; riboflavin biosynthesis; riboflavin from 2-hydroxy-3-oxobutyl phosphate and 5-amino-6-(D-ribitylamino)uracil: step 1/2. Its function is as follows. Catalyzes the formation of 6,7-dimethyl-8-ribityllumazine by condensation of 5-amino-6-(D-ribitylamino)uracil with 3,4-dihydroxy-2-butanone 4-phosphate. This is the penultimate step in the biosynthesis of riboflavin. The chain is 6,7-dimethyl-8-ribityllumazine synthase from Agrobacterium fabrum (strain C58 / ATCC 33970) (Agrobacterium tumefaciens (strain C58)).